The sequence spans 370 residues: Histidinol-phosphate aminotransferase 3 (370 aa).

The residue at position 233 (Lys-233) is an N6-(pyridoxal phosphate)lysine.

It belongs to the class-II pyridoxal-phosphate-dependent aminotransferase family. Histidinol-phosphate aminotransferase subfamily. Homodimer. The cofactor is pyridoxal 5'-phosphate.

It catalyses the reaction L-histidinol phosphate + 2-oxoglutarate = 3-(imidazol-4-yl)-2-oxopropyl phosphate + L-glutamate. It participates in amino-acid biosynthesis; L-histidine biosynthesis; L-histidine from 5-phospho-alpha-D-ribose 1-diphosphate: step 7/9. This Burkholderia lata (strain ATCC 17760 / DSM 23089 / LMG 22485 / NCIMB 9086 / R18194 / 383) protein is Histidinol-phosphate aminotransferase 3.